Reading from the N-terminus, the 233-residue chain is Small ribosomal subunit protein uS3 (233 aa).

One can recognise a KH type-2 domain in the interval 39 to 107 (VRQFLTKELS…PAQINIAEVR (69 aa)).

It belongs to the universal ribosomal protein uS3 family. In terms of assembly, part of the 30S ribosomal subunit. Forms a tight complex with proteins S10 and S14.

In terms of biological role, binds the lower part of the 30S subunit head. Binds mRNA in the 70S ribosome, positioning it for translation. In Vibrio vulnificus (strain CMCP6), this protein is Small ribosomal subunit protein uS3.